A 494-amino-acid polypeptide reads, in one-letter code: DBIRD complex subunit ZNF326 (494 aa).

Disordered regions lie at residues 1 to 22 (MDRE…QSFS), 147 to 170 (AFGG…RGQM), and 202 to 264 (KMAP…NSEK). A compositionally biased stretch (polar residues) spans 7–22 (SYNQRSVNSYGNQSFS). Residues 200–221 (KRKMAPPFKPVGFFGKKQKLSK) carry the Bipartite nuclear localization signal motif. C2H2 AKAP95-type zinc fingers lie at residues 273–295 (CSFC…SATH) and 365–388 (CSAC…SADH). The segment at 429 to 494 (PFETQPDEQQ…CDPLTTTDEV (66 aa)) is disordered. Residues 433-451 (QPDEQQQEQEEEEEEEEQQ) show a composition bias toward acidic residues.

This sequence belongs to the AKAP95 family. As to quaternary structure, component of the DBIRD complex.

The protein localises to the nucleus. Its function is as follows. Core component of the DBIRD complex, a multiprotein complex that acts at the interface between core mRNP particles and RNA polymerase II (RNAPII) and integrates transcript elongation with the regulation of alternative splicing. In Xenopus laevis (African clawed frog), this protein is DBIRD complex subunit ZNF326 (znf326).